Here is a 188-residue protein sequence, read N- to C-terminus: GPI-anchored hemophore ARB_01017 (188 aa).

The signal sequence occupies residues 1 to 17 (MKLSVVALAALVSVAAA). Residues 18-107 (QGVSELPKCA…SSSSGSASST (90 aa)) form the CFEM domain. Disulfide bonds link Cys26-Cys64, Cys30-Cys59, Cys39-Cys45, and Cys47-Cys80. Asp42 contacts heme. The disordered stretch occupies residues 95 to 163 (TGGSSSSGSA…ATSTGAPTQT (69 aa)). A lipid anchor (GPI-anchor amidated asparagine) is attached at Asn165. A propeptide spans 166 to 188 (AAASVNANGGLLAAIAALVIAVA) (removed in mature form).

Belongs to the RBT5 family. Post-translationally, the GPI-anchor is attached to the protein in the endoplasmic reticulum and serves to target the protein to the cell surface. There, the glucosamine-inositol phospholipid moiety is cleaved off and the GPI-modified mannoprotein is covalently attached via its lipidless GPI glycan remnant to the 1,6-beta-glucan of the outer cell wall layer.

It is found in the secreted. Its subcellular location is the cell wall. The protein resides in the cell membrane. GPI-anchored cell wall protein involved in stabilizing the cell wall. This Arthroderma benhamiae (strain ATCC MYA-4681 / CBS 112371) (Trichophyton mentagrophytes) protein is GPI-anchored hemophore ARB_01017.